The sequence spans 673 residues: MLNGEKSALGEMPSNSNSSSKLNAKSPNFIPSSSNIPRSSAKTKEHSADRKPHRNSEKKTQGMPRKNQQLASSERKTKNKKRLEKQSSAIADSIGESLDDPQTVYDEHLFDILSARTNKRGQINLNHLLNFQFTPRTNSNAFSAPPRRSRGYNTYGQGSGHHPMDKSRYVNANYRFVVSPIGDYQSQKLDPDSPVKWEDVWQVLCSSDFQLAACPFCLEEKPVAARMSRCGHVYCFSCLLRFVETPTAAEVKAAETSGTKIVKCGHRSCPICWDSIRLRDVHPIRWVEDKEFQKLEEGKSVCLRLYQRNNGSILAFPRSCRSFALDGSFHSDEIPNFTMSGAAYARIIIGSHDYMVQQHLLEIEQLQQIAAEDISLYGSADTYYERITQILLDRISSLSESVNEQNIKSLQTDIDNLCLQSNSLKQLSEVDDLNDVSGSEIADAYLFYQPFAHSHIYLSPLDIRILKSAFGSYENFPDELVPRVERISSGHLVNSELRQRFKYMAHLPEGCEVAFIECDWSKIIPKEVLLTFKSEISKRRKQRKAQEMREERYRQRAERDTEEQIYSELNMQRPVPKTVVHEDPAEAFPTLGSHHQFESTDEVNTDESTLSTAKTVWGTRALANIQNDTDDQDDLDGWKVDWDKVAQLSAPSKNSKNKKKKKLVLLSTGAAHR.

The tract at residues 1–95 is disordered; the sequence is MLNGEKSALG…QSSAIADSIG (95 aa). Low complexity predominate over residues 13 to 40; it reads PSNSNSSSKLNAKSPNFIPSSSNIPRSS. Positions 42-60 are enriched in basic and acidic residues; the sequence is KTKEHSADRKPHRNSEKKT. The RING-type zinc-finger motif lies at 214–273; it reads CPFCLEEKPVAARMSRCGHVYCFSCLLRFVETPTAAEVKAAETSGTKIVKCGHRSCPICW. Residues 649 to 673 are disordered; sequence SAPSKNSKNKKKKKLVLLSTGAAHR.

It is found in the cytoplasm. Its subcellular location is the nucleus. This is an uncharacterized protein from Schizosaccharomyces pombe (strain 972 / ATCC 24843) (Fission yeast).